Reading from the N-terminus, the 228-residue chain is PKHD-type hydroxylase Reut_A2877 (228 aa).

Positions 80–180 constitute a Fe2OG dioxygenase domain; sequence IVYPPMFNRY…RVASFFWIQS (101 aa). Residues histidine 98, aspartate 100, and histidine 161 each contribute to the Fe cation site. Arginine 171 contributes to the 2-oxoglutarate binding site.

It depends on Fe(2+) as a cofactor. Requires L-ascorbate as cofactor.

The sequence is that of PKHD-type hydroxylase Reut_A2877 from Cupriavidus pinatubonensis (strain JMP 134 / LMG 1197) (Cupriavidus necator (strain JMP 134)).